The sequence spans 170 residues: Cyclic pyranopterin monophosphate synthase (170 aa).

Residues 89 to 91 and 125 to 126 contribute to the substrate site; these read LCH and ME. The active site involves D140.

It belongs to the MoaC family. In terms of assembly, homohexamer; trimer of dimers.

The enzyme catalyses (8S)-3',8-cyclo-7,8-dihydroguanosine 5'-triphosphate = cyclic pyranopterin phosphate + diphosphate. The protein operates within cofactor biosynthesis; molybdopterin biosynthesis. Catalyzes the conversion of (8S)-3',8-cyclo-7,8-dihydroguanosine 5'-triphosphate to cyclic pyranopterin monophosphate (cPMP). The sequence is that of Cyclic pyranopterin monophosphate synthase from Streptomyces coelicolor (strain ATCC BAA-471 / A3(2) / M145).